A 1162-amino-acid polypeptide reads, in one-letter code: Glycerophosphocholine phosphodiesterase GDE1 (1162 aa).

The SPX domain occupies 1–155 (MKFGKTYVTH…TSILSQHSGV (155 aa)). 6 ANK repeats span residues 346 to 375 (YHRT…KWGL), 392 to 421 (EGLT…AQTL), 423 to 452 (CPNL…DVNY), 458 to 487 (RNET…NTEI), 492 to 521 (FGWT…SYDI), and 525 to 554 (SGWL…KLLL). The 330-residue stretch at 817-1146 (TRVIGHRGLG…DSVLAVREGL (330 aa)) folds into the GP-PDE domain.

The protein belongs to the GDE1 family.

It localises to the cytoplasm. It catalyses the reaction sn-glycerol 3-phosphocholine + H2O = sn-glycerol 3-phosphate + choline + H(+). Glycerophosphocholine glycerophosphodiesterase responsible for the hydrolysis of intracellular glycerophosphocholine into glycerol-phosphate and choline. The choline is used for phosphatidyl-choline synthesis. Required for utilization of glycerophosphocholine as phosphate source. C.albicans can utilize GroPCho through transport and intracellular hydrolysis or through extracellular hydrolysis. The sequence is that of Glycerophosphocholine phosphodiesterase GDE1 from Candida albicans (strain SC5314 / ATCC MYA-2876) (Yeast).